The following is a 415-amino-acid chain: Phosphopentomutase (415 aa).

6 residues coordinate Mn(2+): Asp10, Asp313, His318, Asp354, His355, and His366.

The protein belongs to the phosphopentomutase family. Mn(2+) serves as cofactor.

It is found in the cytoplasm. It catalyses the reaction 2-deoxy-alpha-D-ribose 1-phosphate = 2-deoxy-D-ribose 5-phosphate. The catalysed reaction is alpha-D-ribose 1-phosphate = D-ribose 5-phosphate. It functions in the pathway carbohydrate degradation; 2-deoxy-D-ribose 1-phosphate degradation; D-glyceraldehyde 3-phosphate and acetaldehyde from 2-deoxy-alpha-D-ribose 1-phosphate: step 1/2. Functionally, isomerase that catalyzes the conversion of deoxy-ribose 1-phosphate (dRib-1-P) and ribose 1-phosphate (Rib-1-P) to deoxy-ribose 5-phosphate (dRib-5-P) and ribose 5-phosphate (Rib-5-P), respectively. This chain is Phosphopentomutase, found in Psychromonas ingrahamii (strain DSM 17664 / CCUG 51855 / 37).